A 358-amino-acid chain; its full sequence is Peptide chain release factor 1 (358 aa).

N5-methylglutamine is present on Gln237.

The protein belongs to the prokaryotic/mitochondrial release factor family. Post-translationally, methylated by PrmC. Methylation increases the termination efficiency of RF1.

Its subcellular location is the cytoplasm. In terms of biological role, peptide chain release factor 1 directs the termination of translation in response to the peptide chain termination codons UAG and UAA. This chain is Peptide chain release factor 1, found in Streptomyces griseus subsp. griseus (strain JCM 4626 / CBS 651.72 / NBRC 13350 / KCC S-0626 / ISP 5235).